The following is a 184-amino-acid chain: Tumor necrosis factor receptor superfamily member 17 (184 aa).

The Extracellular segment spans residues 1–54; it reads MLQMAGQCSQNEYFDSLLHACIPCQLRCSSNTPPLTCQRYCNASVTNSVKGTNA. Residues 7 to 41 form a TNFR-Cys repeat; the sequence is QCSQNEYFDSLLHACIPCQLRCSSNTPPLTCQRYC. 3 cysteine pairs are disulfide-bonded: cysteine 8/cysteine 21, cysteine 24/cysteine 37, and cysteine 28/cysteine 41. Residues 55–77 form a helical; Signal-anchor for type III membrane protein membrane-spanning segment; that stretch reads ILWTCLGLSLIISLAVFVLMFLL. Topologically, residues 78–184 are cytoplasmic; sequence RKINSEPLKD…TEIEKSISAR (107 aa).

In terms of assembly, associates with TRAF1, TRAF2, TRAF3, TRAF5 and TRAF6. Expressed in mature B-cells, but not in T-cells or monocytes.

The protein localises to the cell membrane. Its subcellular location is the endomembrane system. Its function is as follows. Receptor for TNFSF13B/BLyS/BAFF and TNFSF13/APRIL. Promotes B-cell survival and plays a role in the regulation of humoral immunity. Activates NF-kappa-B and JNK. This Homo sapiens (Human) protein is Tumor necrosis factor receptor superfamily member 17 (TNFRSF17).